Consider the following 32-residue polypeptide: DNA-binding protein HU (32 aa).

The protein belongs to the bacterial histone-like protein family.

In terms of biological role, histone-like DNA-binding protein which is capable of wrapping DNA to stabilize it, and thus to prevent its denaturation under extreme environmental conditions. This chain is DNA-binding protein HU (hup), found in Synechocystis sp. (strain PCC 6701).